Consider the following 501-residue polypeptide: Archaemetzincin-1 (501 aa).

His261 provides a ligand contact to Zn(2+). The active-site Proton acceptor is the Glu262. Positions 265, 272, 277, 296, and 299 each coordinate Zn(2+). The tract at residues 349-370 (DSGMGCESDTEPVTSPSEPVTP) is disordered.

The protein belongs to the peptidase M54 family. It depends on Zn(2+) as a cofactor.

Functionally, probable zinc metalloprotease. The protein is Archaemetzincin-1 (Amz1) of Rattus norvegicus (Rat).